Reading from the N-terminus, the 291-residue chain is Protein-export membrane protein SecF (291 aa).

Helical transmembrane passes span 19-39, 134-154, 156-176, 187-209, 226-246, and 256-278; these read LVVI…SWYV, LALG…FLMF, VFVP…ISVA, LGTV…LLNN, MRTG…MAAV, and AAIG…LLNL.

The protein belongs to the SecD/SecF family. SecF subfamily. As to quaternary structure, part of the protein translocation apparatus. Forms a complex with SecD.

It is found in the cell membrane. In terms of biological role, involved in protein export. The sequence is that of Protein-export membrane protein SecF from Haloquadratum walsbyi (strain DSM 16790 / HBSQ001).